A 726-amino-acid chain; its full sequence is MSTSDDIHNTTATGKCPFHQGGHDQSAGAGTTTRDWWPNQLRVDLLNQHSNRSNPLGEDFDYRKEFSKLDYYGLKKDLKALLTESQPWWPADWGSYAGLFIRMAWHGAGTYRSIDGRGGAGRGQQRFAPLNSWPDNVSLDKARRLLWPIKQKYGQKISWADLFILAGNVALENSGFRTFGFGAGREDVWEPDLDVNWGDEKAWLTHRHPEALAKAPLGATEMGLIYVNPEGPDHSGEPLSAAAAIRATFGNMGMNDEETVALIAGGHTLGKTHGAGPTSNVGPDPEAAPIEEQGLGWASTYGSGVGADAITSGLEVVWTQTPTQWSNYFFENLFKYEWVQTRSPAGAIQFEAVDAPEIIPDPFDPSKKRKPTMLVTDLTLRFDPEFEKISRRFLNDPQAFNEAFARAWFKLTHRDMGPKSRYIGPEVPKEDLIWQDPLPQPIYNPTEQDIIDLKFAIADSGLSVSELVSVAWASASTFRGGDKRGGANGARLALMPQRDWDVNAAAVRALPVLEKIQKESGKASLADIIVLAGVVGVEKAASAAGLSIHVPFAPGRVDARQDQTDIEMFELLEPIADGFRNYRARLDVSTTESLLIDKAQQLTLTAPEMTALVGGMRVLGANFDSSKNGVFTDRVGVLSNDFFVNLLDMRYEWKATDESKELFEGRDRETGEVKYTASRADLVFGSNSVLRAVAEVYASSDAHEKFVKDFVAAWVKVMNLDRFDLL.

Residues 1 to 33 (MSTSDDIHNTTATGKCPFHQGGHDQSAGAGTTT) are disordered. The tryptophyl-tyrosyl-methioninium (Trp-Tyr) (with M-252) cross-link spans 105-226 (WHGAGTYRSI…LGATEMGLIY (122 aa)). The active-site Proton acceptor is H106. A cross-link (tryptophyl-tyrosyl-methioninium (Tyr-Met) (with W-105)) is located at residues 226–252 (YVNPEGPDHSGEPLSAAAAIRATFGNM). H267 is a binding site for heme b.

Belongs to the peroxidase family. Peroxidase/catalase subfamily. Homodimer or homotetramer. It depends on heme b as a cofactor. Post-translationally, formation of the three residue Trp-Tyr-Met cross-link is important for the catalase, but not the peroxidase activity of the enzyme.

It catalyses the reaction H2O2 + AH2 = A + 2 H2O. It carries out the reaction 2 H2O2 = O2 + 2 H2O. Functionally, bifunctional enzyme with both catalase and broad-spectrum peroxidase activity. The polypeptide is Catalase-peroxidase (Shigella boydii serotype 4 (strain Sb227)).